Consider the following 242-residue polypeptide: Glucosamine-6-phosphate deaminase (242 aa).

Asp-67 (proton acceptor; for enolization step) is an active-site residue. Asn-136 functions as the For ring-opening step in the catalytic mechanism. The Proton acceptor; for ring-opening step role is filled by His-138. Glu-143 functions as the For ring-opening step in the catalytic mechanism.

Belongs to the glucosamine/galactosamine-6-phosphate isomerase family. NagB subfamily.

The catalysed reaction is alpha-D-glucosamine 6-phosphate + H2O = beta-D-fructose 6-phosphate + NH4(+). The protein operates within amino-sugar metabolism; N-acetylneuraminate degradation; D-fructose 6-phosphate from N-acetylneuraminate: step 5/5. Functionally, catalyzes the reversible isomerization-deamination of glucosamine 6-phosphate (GlcN6P) to form fructose 6-phosphate (Fru6P) and ammonium ion. The polypeptide is Glucosamine-6-phosphate deaminase (Clostridium beijerinckii (strain ATCC 51743 / NCIMB 8052) (Clostridium acetobutylicum)).